The sequence spans 380 residues: Cytochrome b (380 aa).

4 helical membrane passes run 34–54 (SGSLLGLCLVVQILTGIFLAM), 78–99 (WFLRYVHANGVSLFFICMYCHI), 114–134 (WNVGVILFLVTILTAFMGYVL), and 179–199 (FFPFHFLFPFIIAALAVIHLV). His-84 and His-98 together coordinate heme b. The heme b site is built by His-183 and His-197. His-202 is an a ubiquinone binding site. Transmembrane regions (helical) follow at residues 227–247 (TKDTVGFILLVAALFSLALLF), 289–309 (LGGVIALVAAILVLFLMPLLN), 321–341 (LSQAAFWLLVAHLFILTWIGS), and 348–369 (YVLLGQVASVLYFSLFIFGFPI).

It belongs to the cytochrome b family. As to quaternary structure, the main subunits of complex b-c1 are: cytochrome b, cytochrome c1 and the Rieske protein. It depends on heme b as a cofactor.

Its subcellular location is the mitochondrion inner membrane. Its function is as follows. Component of the ubiquinol-cytochrome c reductase complex (complex III or cytochrome b-c1 complex) that is part of the mitochondrial respiratory chain. The b-c1 complex mediates electron transfer from ubiquinol to cytochrome c. Contributes to the generation of a proton gradient across the mitochondrial membrane that is then used for ATP synthesis. In Strongylocentrotus purpuratus (Purple sea urchin), this protein is Cytochrome b (MT-CYB).